The chain runs to 269 residues: Cell wall protein TIR3 (269 aa).

The signal sequence occupies residues 1–22; the sequence is MSFTKIAALLAVAAASTQLVSA. Residues 128–242 are disordered; it reads SGSESATASS…TNSSSSATSK (115 aa). N234 carries an N-linked (GlcNAc...) asparagine glycan. Residue G245 is the site of GPI-anchor amidated glycine attachment. The propeptide at 246-269 is removed in mature form; that stretch reads AAMDMGFFSAGVGAAIAGAAAMLL.

It belongs to the SRP1/TIP1 family. Post-translationally, extensively O-glycosylated. In terms of processing, the GPI-anchor is attached to the protein in the endoplasmic reticulum and serves to target the protein to the cell surface. There, the glucosamine-inositol phospholipid moiety is cleaved off and the GPI-modified mannoprotein is covalently attached via its lipidless GPI glycan remnant to the 1,6-beta-glucan of the outer cell wall layer.

Its subcellular location is the secreted. It is found in the cell wall. The protein localises to the membrane. Component of the cell wall. Required for anaerobic growth. The sequence is that of Cell wall protein TIR3 (TIR3) from Saccharomyces cerevisiae (strain ATCC 204508 / S288c) (Baker's yeast).